Consider the following 424-residue polypeptide: UPF0415 protein C7orf25 homolog (424 aa).

Belongs to the UPF0415 family.

The sequence is that of UPF0415 protein C7orf25 homolog from Xenopus laevis (African clawed frog).